The chain runs to 358 residues: uncharacterized protein (358 aa).

An EF-hand domain is found at 229–264 (KQLHEFKLAFDYFDQEKNGWLDYEHFELCLKSQGYN). Asp242, Asn246, Trp248, and His253 together coordinate Ca(2+).

This is an uncharacterized protein from Caenorhabditis elegans.